Consider the following 421-residue polypeptide: Gamma-glutamyl phosphate reductase (421 aa).

The protein belongs to the gamma-glutamyl phosphate reductase family.

The protein localises to the cytoplasm. The enzyme catalyses L-glutamate 5-semialdehyde + phosphate + NADP(+) = L-glutamyl 5-phosphate + NADPH + H(+). Its pathway is amino-acid biosynthesis; L-proline biosynthesis; L-glutamate 5-semialdehyde from L-glutamate: step 2/2. Its function is as follows. Catalyzes the NADPH-dependent reduction of L-glutamate 5-phosphate into L-glutamate 5-semialdehyde and phosphate. The product spontaneously undergoes cyclization to form 1-pyrroline-5-carboxylate. This is Gamma-glutamyl phosphate reductase from Leifsonia xyli subsp. xyli (strain CTCB07).